A 292-amino-acid chain; its full sequence is 4-hydroxy-tetrahydrodipicolinate synthase (292 aa).

A pyruvate-binding site is contributed by Thr45. Residue Tyr133 is the Proton donor/acceptor of the active site. Catalysis depends on Lys161, which acts as the Schiff-base intermediate with substrate. A pyruvate-binding site is contributed by Ile203.

This sequence belongs to the DapA family. Homotetramer; dimer of dimers.

The protein localises to the cytoplasm. The catalysed reaction is L-aspartate 4-semialdehyde + pyruvate = (2S,4S)-4-hydroxy-2,3,4,5-tetrahydrodipicolinate + H2O + H(+). Its pathway is amino-acid biosynthesis; L-lysine biosynthesis via DAP pathway; (S)-tetrahydrodipicolinate from L-aspartate: step 3/4. Functionally, catalyzes the condensation of (S)-aspartate-beta-semialdehyde [(S)-ASA] and pyruvate to 4-hydroxy-tetrahydrodipicolinate (HTPA). This is 4-hydroxy-tetrahydrodipicolinate synthase from Cronobacter sakazakii (strain ATCC BAA-894) (Enterobacter sakazakii).